Here is a 345-residue protein sequence, read N- to C-terminus: Mitochondrial metalloendopeptidase OMA1 (345 aa).

Residues 1-67 (MLRNIIRFKG…ILLDKSSRKY (67 aa)) are Mitochondrial matrix-facing. A helical membrane pass occupies residues 68-88 (LALLFGGCSLFYYTHLDKAPV). The Mitochondrial intermembrane portion of the chain corresponds to 89 to 345 (SDRSRFIWVS…GNYYKSFFSM (257 aa)). His-203 is a binding site for Zn(2+). Glu-204 is an active-site residue. His-207 and Glu-257 together coordinate Zn(2+). Cys-272 and Cys-332 are joined by a disulfide. The tract at residues 314-345 (ENMSKWLPKANEIYEQSDCSSMGNYYKSFFSM) is required for protease activation.

This sequence belongs to the peptidase M48 family. Homooligomer. Zn(2+) serves as cofactor. Forms a redox-dependent disulfide bond, which plays a structural role and regulates its conformational stability and activity.

Its subcellular location is the mitochondrion inner membrane. Its activity is regulated as follows. Protease activity is induced in response to various mitochondrial stress, such as changes in membrane potential, oxidative stress or chronic hyperpolarization, and depends on its C-terminal region. In terms of biological role, protease that is part of the quality control system in the inner membrane of mitochondria. Activated in response to various mitochondrial stress, leading to the proteolytic cleavage of target proteins, such as OXA1 and COX1. Cleaves and thereby promotes the turnover of mistranslated or misfolded membrane proteins. Cleaves the misfolded multi-pass membrane protein OXA1. Involved in quality control of cytochrome oxidase assembly: mediates the cleavage of COX1 in cells lacking COA2. Required for the stability of the respiratory supercomplexes. Required for TOR signaling. This is Mitochondrial metalloendopeptidase OMA1 from Saccharomyces cerevisiae (strain ATCC 204508 / S288c) (Baker's yeast).